We begin with the raw amino-acid sequence, 504 residues long: Peroxisomal N(1)-acetyl-spermine/spermidine oxidase (504 aa).

Residues alanine 16, glutamate 37, arginine 45, and histidine 61–tryptophan 62 each bind FAD. Histidine 64 and valine 187 together coordinate substrate. Residue valine 240 participates in FAD binding. Position 313 (asparagine 313) interacts with substrate. FAD-binding positions include glutamate 465 and threonine 474 to threonine 475. The Microbody targeting signal signature appears at proline 502–leucine 504.

The protein belongs to the flavin monoamine oxidase family. As to quaternary structure, monomer. Requires FAD as cofactor. As to expression, widely expressed at different developmental stages. Expressed at high level in the liver and the stomach, expressed at lower level in heart, spleen, thymus, small intestine, muscle, pancreas, uterus, and breast and expressed at very low level in brain, kidney, lung, testis, skin, adrenal gland and prostate gland.

The protein localises to the peroxisome. Its subcellular location is the cytoplasm. It catalyses the reaction N(1)-acetylspermine + O2 + H2O = 3-acetamidopropanal + spermidine + H2O2. The catalysed reaction is N(1)-acetylspermidine + O2 + H2O = 3-acetamidopropanal + putrescine + H2O2. It carries out the reaction N(1),N(12)-diacetylspermine + O2 + H2O = 3-acetamidopropanal + N(1)-acetylspermidine + H2O2. Its pathway is amine and polyamine metabolism; spermine metabolism. In terms of biological role, flavoenzyme which catalyzes the oxidation of N(1)-acetylspermine to spermidine and is thus involved in the polyamine back-conversion. Can also oxidize N(1)-acetylspermidine to putrescine. Substrate specificity: N(1)-acetylspermine = N(1)-acetylspermidine &gt; N(1),N(12)-diacylspermine &gt;&gt; spermine. Does not oxidize spermidine. Plays an important role in the regulation of polyamine intracellular concentration and has the potential to act as a determinant of cellular sensitivity to the antitumor polyamine analogs. This chain is Peroxisomal N(1)-acetyl-spermine/spermidine oxidase (Paox), found in Mus musculus (Mouse).